A 283-amino-acid polypeptide reads, in one-letter code: DegV domain-containing protein lmo2514 (283 aa).

Positions 5-282 (IAVVTDSTTY…EGALGLTWSI (278 aa)) constitute a DegV domain. Hexadecanoate contacts are provided by Ser63 and Ser96.

Functionally, may bind long-chain fatty acids, such as palmitate, and may play a role in lipid transport or fatty acid metabolism. This is DegV domain-containing protein lmo2514 from Listeria monocytogenes serovar 1/2a (strain ATCC BAA-679 / EGD-e).